The chain runs to 366 residues: Transmembrane protein 25 (366 aa).

The first 26 residues, 1–26 (MALPPGPAALRHTLLLLPALLSSGWG), serve as a signal peptide directing secretion. Over 27–232 (ELEPQIDGQT…APGLLATRVE (206 aa)) the chain is Extracellular. The Ig-like domain maps to 30 to 123 (PQIDGQTWAE…SGRSANASVI (94 aa)). A disulfide bond links C52 and C107. N-linked (GlcNAc...) asparagine glycans are attached at residues N106, N162, N175, N192, and N205. Residues 233 to 253 (VPLLGIVVAAGLALGTLVGFS) traverse the membrane as a helical segment. Over 254-366 (TLVACLVCRK…SSVSSDEIWL (113 aa)) the chain is Cytoplasmic. Over residues 299 to 308 (PSNLQLNDLT) the composition is skewed to polar residues. Residues 299–335 (PSNLQLNDLTPDSRAVKPADRQMAQNNSRPELLDPEP) form a disordered region.

Interacts with GRIN2B. In terms of tissue distribution, expressed throughout the brain with higher levels in the pyramidal cell layer of the hippocampal CA1 and CA3 regions. Also highly expressed within the hippocampal dentate gyrus region and cerebellum and in scattered neurons in the cerebral cortex.

It localises to the cell membrane. It is found in the secreted. The protein resides in the late endosome. Its subcellular location is the lysosome. Functionally, in neurons, modulates the degradation of NMDA receptor GRIN2B subunit. Plays a role in the regulation of neuronal excitability. The polypeptide is Transmembrane protein 25 (TMEM25) (Homo sapiens (Human)).